Consider the following 248-residue polypeptide: Gamma-interferon-inducible lysosomal thiol reductase (248 aa).

Positions methionine 1 to threonine 26 are cleaved as a signal peptide. Positions alanine 27–proline 54 are cleaved as a propeptide — removed in mature form. An intrachain disulfide couples cysteine 69 to cysteine 72. Residues asparagine 92 and asparagine 105 are each glycosylated (N-linked (GlcNAc...) asparagine). A propeptide spans lysine 231–lysine 248 (removed in mature form).

Belongs to the GILT family. In terms of assembly, dimer; disulfide-linked. N-glycosylated. Sugar chains contain mannose-6-phosphate. In terms of processing, synthesized as a 35 kDa precursor which is then processed into the mature 30 kDa form via cleavage of N-terminal and C-terminal propeptides. Processing of the precursor is mediated by multiple lysosomal proteases.

The protein localises to the secreted. The protein resides in the lysosome. Functionally, lysosomal thiol reductase that can reduce protein disulfide bonds. May facilitate the complete unfolding of proteins destined for lysosomal degradation. Plays an important role in antigen processing. Facilitates the generation of MHC class II-restricted epitodes from disulfide bond-containing antigen by the endocytic reduction of disulfide bonds. Also facilitates MHC class I-restricted recognition of exogenous antigens containing disulfide bonds by CD8+ T-cells or crosspresentation. The protein is Gamma-interferon-inducible lysosomal thiol reductase (Ifi30) of Mus musculus (Mouse).